Consider the following 466-residue polypeptide: Adenosylhomocysteinase (466 aa).

T57, D132, and E192 together coordinate substrate. 193–195 provides a ligand contact to NAD(+); that stretch reads TTT. 2 residues coordinate substrate: K222 and D226. NAD(+) contacts are provided by residues N227, 256-261, E279, N314, 335-337, and N380; these read GYGDVG and IGH.

This sequence belongs to the adenosylhomocysteinase family. It depends on NAD(+) as a cofactor.

It is found in the cytoplasm. It catalyses the reaction S-adenosyl-L-homocysteine + H2O = L-homocysteine + adenosine. Its pathway is amino-acid biosynthesis; L-homocysteine biosynthesis; L-homocysteine from S-adenosyl-L-homocysteine: step 1/1. Functionally, may play a key role in the regulation of the intracellular concentration of adenosylhomocysteine. In Rhizobium leguminosarum bv. trifolii (strain WSM2304), this protein is Adenosylhomocysteinase.